Consider the following 420-residue polypeptide: Probable pectate lyase C (420 aa).

An N-terminal signal peptide occupies residues 1–20 (MKLSAPLLVSLAAFSQAVTA). Asn49, Asn165, and Asn202 each carry an N-linked (GlcNAc...) asparagine glycan. Arg205 is a catalytic residue. The EF-hand domain maps to 262-297 (NANFHGYVDNNYYDPDKDGQLDGSELGVSSSNYGGM). The Ca(2+) site is built by Asp275, Asp277, Asp279, Gln281, and Glu286. The tract at residues 357–395 (ATMGGPGTLNGGTPAKDTDGDGIPDEAEKQLGTDPNTND) is disordered. Asn394 is a glycosylation site (N-linked (GlcNAc...) asparagine).

This sequence belongs to the polysaccharide lyase 1 family. The cofactor is Ca(2+).

The protein localises to the secreted. It carries out the reaction Eliminative cleavage of (1-&gt;4)-alpha-D-galacturonan to give oligosaccharides with 4-deoxy-alpha-D-galact-4-enuronosyl groups at their non-reducing ends.. Its function is as follows. Pectinolytic enzyme consist of four classes of enzymes: pectin lyase, polygalacturonase, pectin methylesterase and rhamnogalacturonase. Among pectinolytic enzymes, pectin lyase is the most important in depolymerization of pectin, since it cleaves internal glycosidic bonds of highly methylated pectins. Favors pectate, the anion, over pectin, the methyl ester. In Neosartorya fischeri (strain ATCC 1020 / DSM 3700 / CBS 544.65 / FGSC A1164 / JCM 1740 / NRRL 181 / WB 181) (Aspergillus fischerianus), this protein is Probable pectate lyase C (plyC).